The sequence spans 882 residues: MAAAGGERQLDGQKPGPPHLQQPGDRPAVPGRAEAFLNFTSMHGVQPILKRIRELSQQQLDGAQVPHLQWFRDVAALESPAGLPLREFPFAVYLITGNAGSGKSTCVQTINEVLDCVVTGATRIAAQNMYAKLSGAFLSRPINTIFHEFGFRGNHVQAQLGQYPYTLTSNPASLEDLQRRDLTYYWEVILDLTKRALAASGGEELRNEFRALAALERTLGLAEGALTRLAPATHGALPAFTRSNVIVIDEAGLLGRHLLTAVVYCWWMINALYHTPQYAARLRPVLVCVGSPTQTASLESTFEHQKLRCSVRQSENVLTYLICNRTLREYARLSYSWAIFINNKRCVEHEFGNLMKVLEYGLPITEEHMQFVDRFVVPENYITNPANLPGWTRLFSSHKEVSAYMAKLHAYLKVTREGEFVVFTLPVLTFVSVKEFDEYRRLTHQPGLTIEKWLTANASRITNYSQSQDQDAGHMRCEVHSKQQLVVARNDVTYVLNSQIAVTARLRKLVFGFSGTFRAFEAVLRDDSFVKTQGETSVEFAYRFLSRLIFSGLISFYNFLQRPGLDATQRTLAYARMGELTAEILSLRPKSSGVPTQASVMADAGAPGERAFDFKQLGPRDGGPDDFPDDDLDVIFAGLDEQQLDVFYCHYTPGEPETTAAVHTQFALLKRAFLGRFRILQELFGEAFEVAPFSTYVDNVIFRGCEMLTGSPRGGLMSVALQTDNYTLMGYTYARVFAFADELRRRHATANVAELLEEAPLPYVVLRDQHGFMSVVNTNISEFVESIDSTELAMAINADYGISSKLAMTITRSQGLSLDKVAICFTPGNLRLNSAYVAMSRTTSSEFLRMNLNPLRERHERDDVISEHILSALRDPNVVIVY.

Positions 1–29 (MAAAGGERQLDGQKPGPPHLQQPGDRPAV) are disordered. An ATP-binding site is contributed by 97-104 (GNAGSGKS).

It belongs to the herpesviridae helicase family. In terms of assembly, associates with the primase and the primase-associated factor to form the helicase-primase complex.

It localises to the host nucleus. Component of the helicase/primase complex. Unwinds the DNA at the replication forks and generates single-stranded DNA for both leading and lagging strand synthesis. The primase synthesizes short RNA primers on the lagging strand that the polymerase elongates using dNTPs. Possesses helicase-like motifs and therefore may act as the helicase subunit of the complex. The polypeptide is DNA replication helicase (Homo sapiens (Human)).